The primary structure comprises 375 residues: DNA replication and repair protein RecF (375 aa).

30–37 (GLNGQGKT) provides a ligand contact to ATP.

The protein belongs to the RecF family.

Its subcellular location is the cytoplasm. In terms of biological role, the RecF protein is involved in DNA metabolism; it is required for DNA replication and normal SOS inducibility. RecF binds preferentially to single-stranded, linear DNA. It also seems to bind ATP. This chain is DNA replication and repair protein RecF, found in Halothermothrix orenii (strain H 168 / OCM 544 / DSM 9562).